The chain runs to 692 residues: Putative ESX-1 scaffolding and assembly protein SaeA (692 aa).

Positions 1 to 21 are enriched in basic and acidic residues; sequence MGERGELVSDLHPSDDHDADP. Disordered stretches follow at residues 1–23 and 87–134; these read MGER…DPRL and PAAP…TTGF. A compositionally biased stretch (pro residues) spans 89 to 107; that stretch reads APEPDPPPVPEPQPEPEPG.

The protein localises to the cytoplasm. Its function is as follows. May be involved in assembly of the ESX-1 / type VII specialized secretion system (T7SS), which exports several proteins including EsxA and EsxB. Involved in DNA conjugation in recipient (MKD8) but not donor (mc(2)155) strain. The polypeptide is Putative ESX-1 scaffolding and assembly protein SaeA (Mycolicibacterium smegmatis (strain ATCC 700084 / mc(2)155) (Mycobacterium smegmatis)).